The chain runs to 69 residues: ATP synthase protein 8 (69 aa).

Residues 8–24 (TWTLTISLMIISLFCIY) form a helical membrane-spanning segment. Lysine 55 carries the post-translational modification N6-acetyllysine; alternate. N6-succinyllysine; alternate is present on lysine 55. The residue at position 58 (lysine 58) is an N6-acetyllysine.

It belongs to the ATPase protein 8 family. F-type ATPases have 2 components, CF(1) - the catalytic core - and CF(0) - the membrane proton channel. Component of an ATP synthase complex composed of ATP5PB, ATP5MC1, ATP5F1E, ATP5PD, ATP5ME, ATP5PF, ATP5MF, MT-ATP6, MT-ATP8, ATP5F1A, ATP5F1B, ATP5F1D, ATP5F1C, ATP5PO, ATP5MG, ATP5MK and ATP5MJ. Interacts with PRICKLE3.

The protein resides in the mitochondrion membrane. In terms of biological role, mitochondrial membrane ATP synthase (F(1)F(0) ATP synthase or Complex V) produces ATP from ADP in the presence of a proton gradient across the membrane which is generated by electron transport complexes of the respiratory chain. F-type ATPases consist of two structural domains, F(1) - containing the extramembraneous catalytic core and F(0) - containing the membrane proton channel, linked together by a central stalk and a peripheral stalk. During catalysis, ATP synthesis in the catalytic domain of F(1) is coupled via a rotary mechanism of the central stalk subunits to proton translocation. Part of the complex F(0) domain. Minor subunit located with subunit a in the membrane. The chain is ATP synthase protein 8 (MT-ATP8) from Didelphis virginiana (North American opossum).